We begin with the raw amino-acid sequence, 315 residues long: Homoserine kinase (315 aa).

97 to 107 (PPARGLGSSAT) lines the ATP pocket.

The protein belongs to the GHMP kinase family. Homoserine kinase subfamily.

It is found in the cytoplasm. It catalyses the reaction L-homoserine + ATP = O-phospho-L-homoserine + ADP + H(+). The protein operates within amino-acid biosynthesis; L-threonine biosynthesis; L-threonine from L-aspartate: step 4/5. In terms of biological role, catalyzes the ATP-dependent phosphorylation of L-homoserine to L-homoserine phosphate. This Prochlorococcus marinus (strain NATL1A) protein is Homoserine kinase.